The primary structure comprises 366 residues: tRNA/tmRNA (uracil-C(5))-methyltransferase (366 aa).

5 residues coordinate S-adenosyl-L-methionine: Gln188, Tyr216, Asn221, Glu237, and Asp297. The active-site Nucleophile is the Cys322. The active-site Proton acceptor is Glu356.

Belongs to the class I-like SAM-binding methyltransferase superfamily. RNA M5U methyltransferase family. TrmA subfamily.

The catalysed reaction is uridine(54) in tRNA + S-adenosyl-L-methionine = 5-methyluridine(54) in tRNA + S-adenosyl-L-homocysteine + H(+). It carries out the reaction uridine(341) in tmRNA + S-adenosyl-L-methionine = 5-methyluridine(341) in tmRNA + S-adenosyl-L-homocysteine + H(+). Functionally, dual-specificity methyltransferase that catalyzes the formation of 5-methyluridine at position 54 (m5U54) in all tRNAs, and that of position 341 (m5U341) in tmRNA (transfer-mRNA). The polypeptide is tRNA/tmRNA (uracil-C(5))-methyltransferase (Histophilus somni (strain 129Pt) (Haemophilus somnus)).